The chain runs to 789 residues: MKFTLSWLKEHLETEASVQEIADTLTRIGHEVESVHNPADGLEAFRIARILTAERHPQADRLQILAVDVGESEPLQVVCGAANARAGLVGVFAAPGVYVPGIDVTLKIASIRGVESRGMMCSIRELGLGDEHEGILDLPHEAPVGQSYVEWAGLDDPVFDVAITPDRQDCMGVRGLARDLATAGIGRLKPLAIPRVPVTDAAPAEIAIEDKEGCPAFFGQLIHGIQNGPSPEWMARRLRAIGFRPTSALVDITNYIMFDLGRPLHVYDAGAIKGKLTARKAQNNEKIEALNGKSYDLDPSITVIADDQGVKNIAGIMGAEKASVSGSTTDVIIECAYFDPAAVSQAGQKLGLASDARIRFERGVDPAFLNEGLQIAARMVLDFCGGKATQAVTLGEAPSAVPVISYDPSYVTSLAAMDVAPARQREILEQLGFAIDAGWRVRVPSFRRDVSVVADIVADIVRIEGLDNVPSTALDRGDGVARPIATHGQLTERRVRRAAAAFGMNEAVTWSFISEKDANIFGGAFWKLANPISEDMKVMRPSLLPGLLTAAKRNRDRGQSTIRLFEVGRRYLQEAERPTLGLIFAGERMSRDWQYGKSQNFDAYDAKTAVSAMLDSVGMPVEKLQLLGDAGDVYHPGRSGRLCLGPKNTLAVFGEIHPAILAEFNMEGPVIGAEIFLDALPLRKNSGQLRQPYAPSMLQPVFRDFAFLLPKDVPAADLVRSIAGADKNAIVEARIFDVFTGETIDENEKSLGIEVMLQPAEKSFTDAELQGISDKIVAAAAKKGARLRA.

One can recognise a tRNA-binding domain in the interval 39–149 (ADGLEAFRIA…HEAPVGQSYV (111 aa)). Residues 399 to 471 (SAVPVISYDP…RIEGLDNVPS (73 aa)) enclose the B5 domain. Asp-449, Asp-455, and Asp-459 together coordinate Mg(2+). The 93-residue stretch at 696–788 (SMLQPVFRDF…AAAKKGARLR (93 aa)) folds into the FDX-ACB domain.

It belongs to the phenylalanyl-tRNA synthetase beta subunit family. Type 1 subfamily. Tetramer of two alpha and two beta subunits. Mg(2+) serves as cofactor.

It localises to the cytoplasm. It catalyses the reaction tRNA(Phe) + L-phenylalanine + ATP = L-phenylalanyl-tRNA(Phe) + AMP + diphosphate + H(+). This Zymomonas mobilis subsp. mobilis (strain ATCC 31821 / ZM4 / CP4) protein is Phenylalanine--tRNA ligase beta subunit.